Reading from the N-terminus, the 256-residue chain is DNA repair protein RecO (256 aa).

Belongs to the RecO family.

In terms of biological role, involved in DNA repair and RecF pathway recombination. The sequence is that of DNA repair protein RecO from Streptococcus pneumoniae (strain Hungary19A-6).